The chain runs to 345 residues: Anthranilate phosphoribosyltransferase (345 aa).

Residues G86, 89–90 (GD), T94, 96–99 (NIST), 114–122 (KHGNRNLSS), and A126 contribute to the 5-phospho-alpha-D-ribose 1-diphosphate site. G86 lines the anthranilate pocket. A Mg(2+)-binding site is contributed by S98. N117 is an anthranilate binding site. R172 contributes to the anthranilate binding site. D231 and E232 together coordinate Mg(2+).

The protein belongs to the anthranilate phosphoribosyltransferase family. As to quaternary structure, homodimer. Mg(2+) serves as cofactor.

It catalyses the reaction N-(5-phospho-beta-D-ribosyl)anthranilate + diphosphate = 5-phospho-alpha-D-ribose 1-diphosphate + anthranilate. It participates in amino-acid biosynthesis; L-tryptophan biosynthesis; L-tryptophan from chorismate: step 2/5. In terms of biological role, catalyzes the transfer of the phosphoribosyl group of 5-phosphorylribose-1-pyrophosphate (PRPP) to anthranilate to yield N-(5'-phosphoribosyl)-anthranilate (PRA). The polypeptide is Anthranilate phosphoribosyltransferase (Jannaschia sp. (strain CCS1)).